The following is a 511-amino-acid chain: Aprataxin and PNK-like factor (511 aa).

In terms of domain architecture, FHA-like spans 1–108 (MSGGFELQPR…RILSIPSEVE (108 aa)). Ser116 carries the phosphoserine; by ATM modification. Position 149 is a phosphoserine (Ser149). A KBM motif is present at residues 182–191 (RKRILPTWML). The interval 223-370 (KSQLNTTQQG…ATDSVLQGSE (148 aa)) is disordered. 2 stretches are compositionally biased toward polar residues: residues 225 to 249 (QLNT…SAEQ) and 263 to 293 (STIS…NAQR). Basic residues predominate over residues 304-315 (VSKHKIATKRTP). Polar residues predominate over residues 324–344 (CSENCSSAQGDSLQDESQGSH). The segment covering 345-355 (SESSSNPSNPE) has biased composition (low complexity). Residues Arg376, Tyr381, Tyr386, and Arg387 each contribute to the a glycoprotein site. Residues 377–398 (TSCMYGANCYRKNPVHFQHFSH) form a PBZ-type 1 zinc finger. Positions 406-416 (GVQIVGQDETD) are flexible linker. The PBZ-type 2 zinc finger occupies 419–440 (PECPYGPSCYRKNPQHKIEYRH). Residues Tyr423, Tyr428, and Arg429 each coordinate a glycoprotein. The tract at residues 449–497 (LDEDNDNVGQPNEYDLNDSFLDDEEEDYEPTDEDSDWEPGKEDEEKEDV) is disordered. The span at 468 to 497 (FLDDEEEDYEPTDEDSDWEPGKEDEEKEDV) shows a compositional bias: acidic residues. Positions 476–500 (YEPTDEDSDWEPGKEDEEKEDVEEL) match the NAP1L motif motif. Residues 487–511 (PGKEDEEKEDVEELLKEAKRFMKRK) adopt a coiled-coil conformation.

Belongs to the APLF family. Interacts with LIG4. Interacts with PARP1. Interacts with XRCC4. Interacts (via KBM motif) with XRCC5 and XRCC6; promoting recruitment to DNA damage sites. Interacts with XRCC1. Interacts (via C-terminal disordered region) with histones; interacts with histone H2A, H2B and H3-H4. In terms of processing, poly-ADP-ribosylated. In addition to binding non covalently poly-ADP-ribose via its PBZ-type zinc fingers, the protein is also covalently poly-ADP-ribosylated by PARP1. Phosphorylated in an ATM-dependent manner upon double-strand DNA break.

It localises to the nucleus. The protein localises to the chromosome. The protein resides in the cytoplasm. Its subcellular location is the cytosol. In terms of biological role, histone chaperone involved in single-strand and double-strand DNA break repair. Recruited to sites of DNA damage through interaction with branched poly-ADP-ribose chains, a polymeric post-translational modification synthesized transiently at sites of chromosomal damage to accelerate DNA strand break repair reactions. Following recruitment to DNA damage sites, acts as a histone chaperone that mediates histone eviction during DNA repair and promotes recruitment of histone variant MACROH2A1. Also has a nuclease activity: displays apurinic-apyrimidinic (AP) endonuclease and 3'-5' exonuclease activities in vitro. Also able to introduce nicks at hydroxyuracil and other types of pyrimidine base damage. Together with PARP3, promotes the retention of the LIG4-XRCC4 complex on chromatin and accelerate DNA ligation during non-homologous end-joining (NHEJ). Also acts as a negative regulator of cell pluripotency by promoting histone exchange. Required for the embryo implantation during the epithelial to mesenchymal transition in females. In Homo sapiens (Human), this protein is Aprataxin and PNK-like factor.